Consider the following 144-residue polypeptide: 3-hydroxyacyl-[acyl-carrier-protein] dehydratase FabZ (144 aa).

The active site involves His48.

This sequence belongs to the thioester dehydratase family. FabZ subfamily.

The protein localises to the cytoplasm. The enzyme catalyses a (3R)-hydroxyacyl-[ACP] = a (2E)-enoyl-[ACP] + H2O. Its function is as follows. Involved in unsaturated fatty acids biosynthesis. Catalyzes the dehydration of short chain beta-hydroxyacyl-ACPs and long chain saturated and unsaturated beta-hydroxyacyl-ACPs. This Listeria welshimeri serovar 6b (strain ATCC 35897 / DSM 20650 / CCUG 15529 / CIP 8149 / NCTC 11857 / SLCC 5334 / V8) protein is 3-hydroxyacyl-[acyl-carrier-protein] dehydratase FabZ.